Consider the following 607-residue polypeptide: Dihydroxy-acid dehydratase (607 aa).

Position 81 (D81) interacts with Mg(2+). Residue C122 participates in [2Fe-2S] cluster binding. Positions 123 and 124 each coordinate Mg(2+). The residue at position 124 (K124) is an N6-carboxylysine. C195 is a binding site for [2Fe-2S] cluster. E489 is a Mg(2+) binding site. S515 acts as the Proton acceptor in catalysis.

The protein belongs to the IlvD/Edd family. Homodimer. The cofactor is [2Fe-2S] cluster. It depends on Mg(2+) as a cofactor.

The catalysed reaction is (2R)-2,3-dihydroxy-3-methylbutanoate = 3-methyl-2-oxobutanoate + H2O. The enzyme catalyses (2R,3R)-2,3-dihydroxy-3-methylpentanoate = (S)-3-methyl-2-oxopentanoate + H2O. It functions in the pathway amino-acid biosynthesis; L-isoleucine biosynthesis; L-isoleucine from 2-oxobutanoate: step 3/4. The protein operates within amino-acid biosynthesis; L-valine biosynthesis; L-valine from pyruvate: step 3/4. Functionally, functions in the biosynthesis of branched-chain amino acids. Catalyzes the dehydration of (2R,3R)-2,3-dihydroxy-3-methylpentanoate (2,3-dihydroxy-3-methylvalerate) into 2-oxo-3-methylpentanoate (2-oxo-3-methylvalerate) and of (2R)-2,3-dihydroxy-3-methylbutanoate (2,3-dihydroxyisovalerate) into 2-oxo-3-methylbutanoate (2-oxoisovalerate), the penultimate precursor to L-isoleucine and L-valine, respectively. The polypeptide is Dihydroxy-acid dehydratase (Deinococcus radiodurans (strain ATCC 13939 / DSM 20539 / JCM 16871 / CCUG 27074 / LMG 4051 / NBRC 15346 / NCIMB 9279 / VKM B-1422 / R1)).